The following is a 557-amino-acid chain: Potassium-transporting ATPase potassium-binding subunit (557 aa).

Helical transmembrane passes span 5 to 25 (GFLL…PLGS), 63 to 83 (LCAI…MLLG), 132 to 152 (GLTV…FALI), 170 to 190 (LLRI…LFFI), 253 to 273 (FVQM…FGEV), 283 to 303 (LLWA…WAEV), 329 to 349 (VLVS…AVIA), 356 to 376 (ALGG…FGGV), 379 to 399 (GLYG…LMIG), 416 to 436 (LTAL…ALAM), 484 to 504 (LLAF…MAIA), and 526 to 546 (LFVG…FIPA).

The protein belongs to the KdpA family. The system is composed of three essential subunits: KdpA, KdpB and KdpC.

Its subcellular location is the cell inner membrane. Part of the high-affinity ATP-driven potassium transport (or Kdp) system, which catalyzes the hydrolysis of ATP coupled with the electrogenic transport of potassium into the cytoplasm. This subunit binds the periplasmic potassium ions and delivers the ions to the membrane domain of KdpB through an intramembrane tunnel. This is Potassium-transporting ATPase potassium-binding subunit from Escherichia coli O139:H28 (strain E24377A / ETEC).